A 525-amino-acid polypeptide reads, in one-letter code: Probable bifunctional tRNA threonylcarbamoyladenosine biosynthesis protein (525 aa).

The kae1 stretch occupies residues 1–322 (MPEKRVLGIE…FRSDQVEVTW (322 aa)). Positions 106, 110, and 127 each coordinate Fe cation. L-threonylcarbamoyladenylate is bound by residues 127-131 (YASGA), D159, G172, E176, and N255. D283 contacts Fe cation. Residues 331 to 525 (APGQSETAER…HEIELRGRYL (195 aa)) enclose the Protein kinase domain. Residues 338 to 346 (AERGAEASV) and K355 each bind ATP. Catalysis depends on D442, which acts as the Proton acceptor; for kinase activity.

The protein in the N-terminal section; belongs to the KAE1 / TsaD family. In the C-terminal section; belongs to the protein kinase superfamily. Tyr protein kinase family. BUD32 subfamily. As to quaternary structure, component of the KEOPS complex that consists of Kae1, Bud32, Cgi121 and Pcc1; the whole complex dimerizes. Requires Fe(2+) as cofactor.

It localises to the cytoplasm. It catalyses the reaction L-seryl-[protein] + ATP = O-phospho-L-seryl-[protein] + ADP + H(+). It carries out the reaction L-threonyl-[protein] + ATP = O-phospho-L-threonyl-[protein] + ADP + H(+). The enzyme catalyses L-threonylcarbamoyladenylate + adenosine(37) in tRNA = N(6)-L-threonylcarbamoyladenosine(37) in tRNA + AMP + H(+). In terms of biological role, required for the formation of a threonylcarbamoyl group on adenosine at position 37 (t(6)A37) in tRNAs that read codons beginning with adenine. Is a component of the KEOPS complex that is probably involved in the transfer of the threonylcarbamoyl moiety of threonylcarbamoyl-AMP (TC-AMP) to the N6 group of A37. The Kae1 domain likely plays a direct catalytic role in this reaction. The Bud32 domain probably displays kinase activity that regulates Kae1 function. The sequence is that of Probable bifunctional tRNA threonylcarbamoyladenosine biosynthesis protein from Methanocorpusculum labreanum (strain ATCC 43576 / DSM 4855 / Z).